The sequence spans 110 residues: uncharacterized protein (110 aa).

Transmembrane regions (helical) follow at residues 32-52 (VLNV…ALVP), 57-77 (YTHM…CICI), and 90-110 (FLAS…TFVI).

It localises to the membrane. Its function is as follows. May play a role in proper chromosome segregation. Suppresses the high-frequency loss of mini-chromosomes when overexpressed, and this suppression is completely dependent on silencing protein SIR4. This is an uncharacterized protein from Saccharomyces cerevisiae (strain ATCC 204508 / S288c) (Baker's yeast).